A 428-amino-acid chain; its full sequence is 3-phosphoshikimate 1-carboxyvinyltransferase (428 aa).

Positions 20, 21, and 25 each coordinate 3-phosphoshikimate. Lysine 20 provides a ligand contact to phosphoenolpyruvate. Phosphoenolpyruvate is bound by residues glycine 92 and arginine 120. 3-phosphoshikimate contacts are provided by serine 166, glutamine 168, aspartate 314, and lysine 341. Glutamine 168 provides a ligand contact to phosphoenolpyruvate. Catalysis depends on aspartate 314, which acts as the Proton acceptor. 2 residues coordinate phosphoenolpyruvate: arginine 345 and arginine 387.

Belongs to the EPSP synthase family. Monomer.

The protein resides in the cytoplasm. The enzyme catalyses 3-phosphoshikimate + phosphoenolpyruvate = 5-O-(1-carboxyvinyl)-3-phosphoshikimate + phosphate. Its pathway is metabolic intermediate biosynthesis; chorismate biosynthesis; chorismate from D-erythrose 4-phosphate and phosphoenolpyruvate: step 6/7. In terms of biological role, catalyzes the transfer of the enolpyruvyl moiety of phosphoenolpyruvate (PEP) to the 5-hydroxyl of shikimate-3-phosphate (S3P) to produce enolpyruvyl shikimate-3-phosphate and inorganic phosphate. The protein is 3-phosphoshikimate 1-carboxyvinyltransferase of Listeria innocua serovar 6a (strain ATCC BAA-680 / CLIP 11262).